The chain runs to 310 residues: MSFPDITPDLKAAMPSLRGRLLGNEPLAPLTWFRVGGPAQALFTPADEDDLGYFLSRLPTEVPMLCIGVGSNLIVRDGGLPGVVIRLAPRGFGDTRADGEIVYAGAAALDKRVAETAAAAKLGGLEFYFGIPGTVGGALRMNAGANGRETKDALIDATAFDRSGNRRVLGNADMQFSYRHSGADPALIFTSARFRGTPASPDAIRAKMNEVQAHRELAQPVREKTGGSTFKNPPDNSAWKLIDAAGCRGLRVGGAQVSEMHCNFLINTSDATAADIETLGETVRERVKAQSGIELQWEIKRIGVAVDAAR.

Residues Val-35 to Ala-199 form the FAD-binding PCMH-type domain. The active site involves Arg-179. Ser-228 acts as the Proton donor in catalysis. Glu-298 is an active-site residue.

This sequence belongs to the MurB family. It depends on FAD as a cofactor.

Its subcellular location is the cytoplasm. The catalysed reaction is UDP-N-acetyl-alpha-D-muramate + NADP(+) = UDP-N-acetyl-3-O-(1-carboxyvinyl)-alpha-D-glucosamine + NADPH + H(+). It participates in cell wall biogenesis; peptidoglycan biosynthesis. Cell wall formation. In Rhodopseudomonas palustris (strain BisB5), this protein is UDP-N-acetylenolpyruvoylglucosamine reductase.